Consider the following 326-residue polypeptide: Phenylalanine--tRNA ligase alpha subunit (326 aa).

Glu-251 contributes to the Mg(2+) binding site.

This sequence belongs to the class-II aminoacyl-tRNA synthetase family. Phe-tRNA synthetase alpha subunit type 1 subfamily. Tetramer of two alpha and two beta subunits. It depends on Mg(2+) as a cofactor.

It localises to the cytoplasm. The enzyme catalyses tRNA(Phe) + L-phenylalanine + ATP = L-phenylalanyl-tRNA(Phe) + AMP + diphosphate + H(+). The protein is Phenylalanine--tRNA ligase alpha subunit of Alteromonas mediterranea (strain DSM 17117 / CIP 110805 / LMG 28347 / Deep ecotype).